Here is a 1639-residue protein sequence, read N- to C-terminus: Mediator of RNA polymerase II transcription subunit 14 (1639 aa).

Residues 49 to 53 carry the LXXLL motif 1 motif; sequence LAELL. Disordered regions lie at residues 561-586 and 709-755; these read GQSPDVLSGQPPQPSAAGGPAPGSDS and LPQP…KTVH. Over residues 575 to 586 the composition is skewed to low complexity; that stretch reads SAAGGPAPGSDS. Residues 711–721 are compositionally biased toward pro residues; sequence QPKPPQAPPTP. The span at 722–748 shows a compositional bias: low complexity; it reads QQQQQQQQQQQQPGTSDAKSSGAGASA. The short motif at 768–772 is the LXXLL motif 2 element; the sequence is LKRLL. 2 disordered regions span residues 1039–1243 and 1558–1639; these read RRSQ…HHYT and MQPG…GGPN. 2 stretches are compositionally biased toward gly residues: residues 1062–1088 and 1122–1142; these read GNNGGGGGGGGGAGGGANTFLSGGTGM and IGGGGGAGGAGGQGGQGGQGG. Positions 1189–1201 are enriched in polar residues; sequence GPSSLSYMQSHTD. Residues 1219–1229 are compositionally biased toward pro residues; it reads PGMPRPSPRPG. The segment covering 1558–1579 has biased composition (gly residues); the sequence is MQPGGGPGVPGGPGGPMGGQIG. The span at 1589–1603 shows a compositional bias: low complexity; the sequence is VGSSPSPMMHSPMQQ. Gly residues predominate over residues 1604-1639; that stretch reads MGGGGPQPGAYGGMVGGPGGGPQSGGPVGGGPGGPN.

Belongs to the Mediator complex subunit 14 family. Component of the Mediator complex.

The protein resides in the nucleus. Component of the Mediator complex, a coactivator involved in the regulated transcription of nearly all RNA polymerase II-dependent genes. Mediator functions as a bridge to convey information from gene-specific regulatory proteins to the basal RNA polymerase II transcription machinery. Mediator is recruited to promoters by direct interactions with regulatory proteins and serves as a scaffold for the assembly of a functional preinitiation complex with RNA polymerase II and the general transcription factors. This is Mediator of RNA polymerase II transcription subunit 14 (MED14) from Anopheles gambiae (African malaria mosquito).